Consider the following 153-residue polypeptide: Endoribonuclease YbeY (153 aa).

Residues His119, His123, and His129 each coordinate Zn(2+).

It belongs to the endoribonuclease YbeY family. It depends on Zn(2+) as a cofactor.

The protein resides in the cytoplasm. Functionally, single strand-specific metallo-endoribonuclease involved in late-stage 70S ribosome quality control and in maturation of the 3' terminus of the 16S rRNA. The polypeptide is Endoribonuclease YbeY (Desulforamulus reducens (strain ATCC BAA-1160 / DSM 100696 / MI-1) (Desulfotomaculum reducens)).